The sequence spans 120 residues: Large ribosomal subunit protein bL20 (120 aa).

This sequence belongs to the bacterial ribosomal protein bL20 family.

Its function is as follows. Binds directly to 23S ribosomal RNA and is necessary for the in vitro assembly process of the 50S ribosomal subunit. It is not involved in the protein synthesizing functions of that subunit. The polypeptide is Large ribosomal subunit protein bL20 (Blochmanniella pennsylvanica (strain BPEN)).